A 353-amino-acid polypeptide reads, in one-letter code: Photosystem II D2 protein (353 aa).

An N-acetylthreonine modification is found at Thr-2. The residue at position 2 (Thr-2) is a Phosphothreonine. A helical transmembrane segment spans residues 41–61; the sequence is CAYFALGGWFTGTTFVTSWYT. His-118 contacts chlorophyll a. Residues 125–141 traverse the membrane as a helical segment; it reads GFMLRQFELARSVQLRP. Pheophytin a is bound by residues Gln-130 and Asn-143. The helical transmembrane segment at 153–166 threads the bilayer; that stretch reads VFVSVFLIYPLGQS. A chlorophyll a-binding site is contributed by His-198. Residues 208-228 traverse the membrane as a helical segment; that stretch reads AALLCAIHGATVENTLFEDGD. Residues His-215 and Phe-262 each coordinate a plastoquinone. His-215 is a binding site for Fe cation. Fe cation is bound at residue His-269. A helical membrane pass occupies residues 279–295; the sequence is GLWMSALGVVGLALNLR.

This sequence belongs to the reaction center PufL/M/PsbA/D family. In terms of assembly, PSII is composed of 1 copy each of membrane proteins PsbA, PsbB, PsbC, PsbD, PsbE, PsbF, PsbH, PsbI, PsbJ, PsbK, PsbL, PsbM, PsbT, PsbX, PsbY, PsbZ, Psb30/Ycf12, at least 3 peripheral proteins of the oxygen-evolving complex and a large number of cofactors. It forms dimeric complexes. The cofactor is The D1/D2 heterodimer binds P680, chlorophylls that are the primary electron donor of PSII, and subsequent electron acceptors. It shares a non-heme iron and each subunit binds pheophytin, quinone, additional chlorophylls, carotenoids and lipids. There is also a Cl(-1) ion associated with D1 and D2, which is required for oxygen evolution. The PSII complex binds additional chlorophylls, carotenoids and specific lipids..

Its subcellular location is the plastid. It is found in the chloroplast thylakoid membrane. The enzyme catalyses 2 a plastoquinone + 4 hnu + 2 H2O = 2 a plastoquinol + O2. In terms of biological role, photosystem II (PSII) is a light-driven water:plastoquinone oxidoreductase that uses light energy to abstract electrons from H(2)O, generating O(2) and a proton gradient subsequently used for ATP formation. It consists of a core antenna complex that captures photons, and an electron transfer chain that converts photonic excitation into a charge separation. The D1/D2 (PsbA/PsbD) reaction center heterodimer binds P680, the primary electron donor of PSII as well as several subsequent electron acceptors. D2 is needed for assembly of a stable PSII complex. This Spinacia oleracea (Spinach) protein is Photosystem II D2 protein.